Consider the following 2252-residue polypeptide: RNA1 polyprotein (2252 aa).

Residues 565 to 1140 are Cytoplasmic-facing; that stretch reads MITTLAQSIF…QGREFIVSNG (576 aa). The SF3 helicase domain maps to 733–899; the sequence is MKDLLELQKR…PGVIFDPDNA (167 aa). Residue 763–770 coordinates ATP; that stretch reads GPSHCGKS. A helical membrane pass occupies residues 1141–1161; it reads GGILMIAAAIILVLVCGWGFW. Topologically, residues 1162-1187 are lumenal; sequence KAFVGLFTGSMSLGAALAGCQEAEVK. In terms of domain architecture, Peptidase C3 spans 1213–1422; sequence SYARSQAGNG…WACILPNPHL (210 aa). Residues His-1256, Glu-1294, and Cys-1386 each act as for picornain 3C-like protease activity in the active site. Positions 1697–1825 constitute a RdRp catalytic domain; it reads NEAINCDYSG…SVSPAVASWF (129 aa).

This sequence belongs to the nepoviruses RNA1 polyprotein family. In terms of processing, specific enzymatic cleavages by picornain 3C-like protease in vivo yield mature proteins. Picornain 3C-like protease is autocatalytically processed. VPg is uridylylated by the polymerase and is covalently linked to the 5'-end of genomic RNA. This uridylylated form acts as a nucleotide-peptide primer for the polymerase.

Its subcellular location is the host endoplasmic reticulum lumen. The protein localises to the host endoplasmic reticulum membrane. It catalyses the reaction RNA(n) + a ribonucleoside 5'-triphosphate = RNA(n+1) + diphosphate. Its function is as follows. Picornain 3C-like protease is a thiol protease that cleaves the P1 and P2 polyproteins. This is RNA1 polyprotein from Apium graveolens (Celery).